We begin with the raw amino-acid sequence, 308 residues long: D-alanine--D-alanine ligase (308 aa).

The region spanning 105 to 302 is the ATP-grasp domain; it reads KAIFRSLGLA…FPDLCERILD (198 aa). 133–188 contacts ATP; the sequence is DLPFGLPCVVKPAGEGSSVGVHLVNEAAELGPACRDAASHAGDVIVERYVKGTEVD. Mg(2+)-binding residues include D256, E269, and N271.

This sequence belongs to the D-alanine--D-alanine ligase family. It depends on Mg(2+) as a cofactor. Mn(2+) serves as cofactor.

It is found in the cytoplasm. It catalyses the reaction 2 D-alanine + ATP = D-alanyl-D-alanine + ADP + phosphate + H(+). It participates in cell wall biogenesis; peptidoglycan biosynthesis. Its function is as follows. Cell wall formation. This chain is D-alanine--D-alanine ligase, found in Anaeromyxobacter dehalogenans (strain 2CP-1 / ATCC BAA-258).